We begin with the raw amino-acid sequence, 178 residues long: Crossover junction endodeoxyribonuclease RuvC (178 aa).

Catalysis depends on residues aspartate 14, glutamate 73, and aspartate 145. Mg(2+) contacts are provided by aspartate 14, glutamate 73, and aspartate 145.

This sequence belongs to the RuvC family. As to quaternary structure, homodimer which binds Holliday junction (HJ) DNA. The HJ becomes 2-fold symmetrical on binding to RuvC with unstacked arms; it has a different conformation from HJ DNA in complex with RuvA. In the full resolvosome a probable DNA-RuvA(4)-RuvB(12)-RuvC(2) complex forms which resolves the HJ. It depends on Mg(2+) as a cofactor.

The protein localises to the cytoplasm. The catalysed reaction is Endonucleolytic cleavage at a junction such as a reciprocal single-stranded crossover between two homologous DNA duplexes (Holliday junction).. Its function is as follows. The RuvA-RuvB-RuvC complex processes Holliday junction (HJ) DNA during genetic recombination and DNA repair. Endonuclease that resolves HJ intermediates. Cleaves cruciform DNA by making single-stranded nicks across the HJ at symmetrical positions within the homologous arms, yielding a 5'-phosphate and a 3'-hydroxyl group; requires a central core of homology in the junction. The consensus cleavage sequence is 5'-(A/T)TT(C/G)-3'. Cleavage occurs on the 3'-side of the TT dinucleotide at the point of strand exchange. HJ branch migration catalyzed by RuvA-RuvB allows RuvC to scan DNA until it finds its consensus sequence, where it cleaves and resolves the cruciform DNA. The polypeptide is Crossover junction endodeoxyribonuclease RuvC (Nitrosomonas eutropha (strain DSM 101675 / C91 / Nm57)).